A 459-amino-acid chain; its full sequence is Cyclooctatin synthase (459 aa).

C408 is a binding site for heme.

Belongs to the cytochrome P450 family. The cofactor is heme.

It catalyses the reaction cyclooctat-9-ene-5,7-diol + AH2 + O2 = cyclooctatin + A + H2O. Involved in the biosynthesis of cyclooctatin, a potent inhibitor of lysophospholipase. Catalyzes the hydroxylation of cyclooctat-9-ene-5,7-diol at C-18 to yield the final product, cyclooctatin. The protein is Cyclooctatin synthase of Streptomyces melanosporofaciens.